The primary structure comprises 294 residues: Glyceraldehyde-3-phosphate dehydrogenase (294 aa).

Residues Asp19, Arg63, and Thr105 each contribute to the NAD(+) site. D-glyceraldehyde 3-phosphate-binding positions include 134-136 (SCT) and Thr165. Cys135 functions as the Nucleophile in the catalytic mechanism. Positions 169-188 (KTVDGPSHKDWRGGRGASQN) are disordered. D-glyceraldehyde 3-phosphate is bound by residues 194–195 (TG) and Arg217.

The protein belongs to the glyceraldehyde-3-phosphate dehydrogenase family. In terms of assembly, homotetramer.

The protein resides in the cytoplasm. The catalysed reaction is D-glyceraldehyde 3-phosphate + phosphate + NAD(+) = (2R)-3-phospho-glyceroyl phosphate + NADH + H(+). Its pathway is carbohydrate degradation; glycolysis; pyruvate from D-glyceraldehyde 3-phosphate: step 1/5. Functionally, catalyzes the oxidative phosphorylation of glyceraldehyde 3-phosphate (G3P) to 1,3-bisphosphoglycerate (BPG) using the cofactor NAD. The first reaction step involves the formation of a hemiacetal intermediate between G3P and a cysteine residue, and this hemiacetal intermediate is then oxidized to a thioester, with concomitant reduction of NAD to NADH. The reduced NADH is then exchanged with the second NAD, and the thioester is attacked by a nucleophilic inorganic phosphate to produce BPG. This is Glyceraldehyde-3-phosphate dehydrogenase (gap) from Citrobacter freundii.